The chain runs to 356 residues: Branched-chain-amino-acid aminotransferase 6 (356 aa).

N6-(pyridoxal phosphate)lysine is present on K199.

It belongs to the class-IV pyridoxal-phosphate-dependent aminotransferase family. Pyridoxal 5'-phosphate is required as a cofactor.

It is found in the cytoplasm. It catalyses the reaction L-leucine + 2-oxoglutarate = 4-methyl-2-oxopentanoate + L-glutamate. The enzyme catalyses L-isoleucine + 2-oxoglutarate = (S)-3-methyl-2-oxopentanoate + L-glutamate. The catalysed reaction is L-valine + 2-oxoglutarate = 3-methyl-2-oxobutanoate + L-glutamate. It participates in amino-acid biosynthesis; L-isoleucine biosynthesis; L-isoleucine from 2-oxobutanoate: step 4/4. It functions in the pathway amino-acid biosynthesis; L-leucine biosynthesis; L-leucine from 3-methyl-2-oxobutanoate: step 4/4. The protein operates within amino-acid biosynthesis; L-valine biosynthesis; L-valine from pyruvate: step 4/4. Its function is as follows. Converts 2-oxo acids to branched-chain amino acids. Acts on leucine, isoleucine and valine. This Arabidopsis thaliana (Mouse-ear cress) protein is Branched-chain-amino-acid aminotransferase 6 (BCAT6).